The following is a 592-amino-acid chain: Aspartate--tRNA ligase (592 aa).

Glutamate 180 lines the L-aspartate pocket. The tract at residues 204–207 (QLFK) is aspartate. Arginine 226 contacts L-aspartate. Residues 226-228 (RDE) and glutamine 235 contribute to the ATP site. Histidine 455 is an L-aspartate binding site. Glutamate 489 is an ATP binding site. Arginine 496 lines the L-aspartate pocket. 541-544 (GFDR) is a binding site for ATP.

Belongs to the class-II aminoacyl-tRNA synthetase family. Type 1 subfamily. Homodimer.

The protein localises to the cytoplasm. The enzyme catalyses tRNA(Asp) + L-aspartate + ATP = L-aspartyl-tRNA(Asp) + AMP + diphosphate. Catalyzes the attachment of L-aspartate to tRNA(Asp) in a two-step reaction: L-aspartate is first activated by ATP to form Asp-AMP and then transferred to the acceptor end of tRNA(Asp). The polypeptide is Aspartate--tRNA ligase (Clostridium tetani (strain Massachusetts / E88)).